A 252-amino-acid polypeptide reads, in one-letter code: MPAPTALLRKSDEPLSAEEPSLTFSSDAQASGQGEAPSPIPTESAQHSDMRIDEESRPVFTPITDAGTVLRVETRKVPVPPHRMTPLKANWPKIYPPLVEHLKLQVRMNIKNRAVELRTSKFTTDTGALQKGEDFVKAFTLGFDVDDAIALLRLDDLYIRSFEIRDVKASLNGEHLSRAIGRIAGKDGKTKFAIENASRTRVVLQGTKVTILGRFRDLGIAQEAIVSLILGSPPGKVYGNLRKVASRMKERF.

The disordered stretch occupies residues 1–57 (MPAPTALLRKSDEPLSAEEPSLTFSSDAQASGQGEAPSPIPTESAQHSDMRIDEESR). Residues 22-32 (LTFSSDAQASG) are compositionally biased toward polar residues. Positions 46-57 (QHSDMRIDEESR) are enriched in basic and acidic residues. The KH domain maps to 173-225 (GEHLSRAIGRIAGKDGKTKFAIENASRTRVVLQGTKVTILGRFRDLGIAQEAI).

It belongs to the PNO1 family. In terms of assembly, component of the small ribosomal subunit, ribosomal RNA processing complex (SSU RRP complex).

Its subcellular location is the cytoplasm. It is found in the nucleus. It localises to the nucleolus. In terms of biological role, required for small ribosomal subunit (SSU) synthesis. Has a role in the processing of early nucleolar and late cytoplasmic pre-RNA species. The protein is Pre-rRNA-processing protein pno1 (pno1) of Aspergillus fumigatus (strain ATCC MYA-4609 / CBS 101355 / FGSC A1100 / Af293) (Neosartorya fumigata).